The sequence spans 124 residues: uncharacterized protein (124 aa).

Positions 1–28 (MGTSLRSQSFREPRPSYGRLHESQGRSL) are disordered. The segment covering 9–28 (SFREPRPSYGRLHESQGRSL) has biased composition (basic and acidic residues).

This is an uncharacterized protein from Mus musculus (Mouse).